A 247-amino-acid chain; its full sequence is Fibroblast growth factor 14 (247 aa).

Disordered regions lie at residues 1-38 and 216-247; these read MAAA…KNRG and ETVP…CKTT. Residues 15 to 25 are compositionally biased toward basic and acidic residues; it reads QAREQHWDRPS.

The protein belongs to the heparin-binding growth factors family. Interacts with SCN8A.

It localises to the nucleus. Its function is as follows. Probably involved in nervous system development and function. The chain is Fibroblast growth factor 14 (Fgf14) from Rattus norvegicus (Rat).